A 136-amino-acid chain; its full sequence is Large ribosomal subunit protein eL27 (136 aa).

The KOW domain occupies 5–40; sequence MKPGKVVLVLAGRYSGRKAVIVKNIDDGTSDRPYSH. 2 positions are modified to N6-acetyllysine: Lys-27 and Lys-93.

It belongs to the eukaryotic ribosomal protein eL27 family. In terms of assembly, component of the large ribosomal subunit. Interacts with RRP1B. Component of the large ribosomal subunit. Interacts with RRP1B. Interacts with DHX33.

Its subcellular location is the cytoplasm. It is found in the cytosol. It localises to the rough endoplasmic reticulum. Functionally, component of the large ribosomal subunit. Required for proper rRNA processing and maturation of 28S and 5.8S rRNAs. The sequence is that of Large ribosomal subunit protein eL27 (RPL27) from Canis lupus familiaris (Dog).